A 443-amino-acid polypeptide reads, in one-letter code: Trigger factor (443 aa).

A PPIase FKBP-type domain is found at 164–249 (GDVLCVDFVG…AKSLKKAVDP (86 aa)).

Belongs to the FKBP-type PPIase family. Tig subfamily.

The protein resides in the cytoplasm. It catalyses the reaction [protein]-peptidylproline (omega=180) = [protein]-peptidylproline (omega=0). Its function is as follows. Involved in protein export. Acts as a chaperone by maintaining the newly synthesized protein in an open conformation. Functions as a peptidyl-prolyl cis-trans isomerase. The sequence is that of Trigger factor from Gluconobacter oxydans (strain 621H) (Gluconobacter suboxydans).